We begin with the raw amino-acid sequence, 86 residues long: Small ribosomal subunit protein eS21 (86 aa).

The protein belongs to the eukaryotic ribosomal protein eS21 family. In terms of assembly, component of the 40S small ribosomal subunit.

It localises to the cytoplasm. The protein resides in the cytosol. It is found in the rough endoplasmic reticulum. This chain is Small ribosomal subunit protein eS21 (RPS21), found in Suberites domuncula (Sponge).